Consider the following 389-residue polypeptide: Na(+)/H(+) antiporter NhaA (389 aa).

The next 11 membrane-spanning stretches (helical) occupy residues 14–34, 59–79, 95–115, 124–144, 154–174, 177–197, 213–233, 257–277, 292–312, 328–348, and 363–383; these read AGGILLLVAVALAMLMANSPL, LILWINDGLMAVFFLLIGLEV, SLPTFAAIGGMLVPAGVYLLF, AGWAIPAATDIAFALGIMALL, VFLLALAIIDDLGVIVIIALF, TDLSTISLVIASLAIAGLVGL, LILWVAVLKSGVHATLAGVII, PWSTFFILPVFAFANAGVYVG, IALGLMLGKPIGVMVFSYIAV, IAPVAAMCGIGFTMSMFIASL, and LGTLIGSIMAALVGYFWLSKV.

Belongs to the NhaA Na(+)/H(+) (TC 2.A.33) antiporter family.

The protein resides in the cell inner membrane. The catalysed reaction is Na(+)(in) + 2 H(+)(out) = Na(+)(out) + 2 H(+)(in). Functionally, na(+)/H(+) antiporter that extrudes sodium in exchange for external protons. In Shewanella baltica (strain OS223), this protein is Na(+)/H(+) antiporter NhaA.